The following is a 99-amino-acid chain: C-C motif chemokine 17 (99 aa).

Residues 1 to 23 (MMSLKLLLLVMLLLGASLQVTHA) form the signal peptide. Intrachain disulfides connect Cys-33–Cys-57 and Cys-34–Cys-73.

The protein belongs to the intercrine beta (chemokine CC) family. As to expression, expressed in thymus and also in spleen, lung, lymph node, kidney, small intestine, colon and skin.

The protein localises to the secreted. Its function is as follows. Chemokine, which displays chemotactic activity for T lymphocytes, preferentially Th2 cells, but not monocytes or granulocytes. Therefore plays an important role in a wide range of inflammatory and immunological processes. Acts by binding to CCR4 at T-cell surface. Mediates GM-CSF/CSF2-driven pain and inflammation. In the brain, required to maintain the typical, highly branched morphology of hippocampal microglia under homeostatic conditions. May be important for the appropriate adaptation of microglial morphology and synaptic plasticity to acute lipopolysaccharide (LPS)-induced neuroinflammation. Plays a role in wound healing, mainly by inducing fibroblast migration into the wound. This Felis catus (Cat) protein is C-C motif chemokine 17 (CCL17).